The primary structure comprises 263 residues: Small ribosomal subunit protein uS2 (263 aa).

The protein belongs to the universal ribosomal protein uS2 family.

This chain is Small ribosomal subunit protein uS2, found in Hyphomonas neptunium (strain ATCC 15444).